Consider the following 152-residue polypeptide: Protein SprT-like (152 aa).

The 141-residue stretch at 7-147 (QRLVEEVSLQ…CGKCKGKLKP (141 aa)) folds into the SprT-like domain. H67 is a binding site for Zn(2+). The active site involves E68. Residue H71 participates in Zn(2+) binding.

Belongs to the SprT family. The cofactor is Zn(2+).

Its subcellular location is the cytoplasm. This Bacillus cereus (strain B4264) protein is Protein SprT-like.